Consider the following 160-residue polypeptide: Ureidoglycolate lyase (160 aa).

The protein belongs to the ureidoglycolate lyase family. Homodimer. Ni(2+) serves as cofactor.

The catalysed reaction is (S)-ureidoglycolate = urea + glyoxylate. It participates in nitrogen metabolism; (S)-allantoin degradation. In terms of biological role, catalyzes the catabolism of the allantoin degradation intermediate (S)-ureidoglycolate, generating urea and glyoxylate. Involved in the utilization of allantoin as nitrogen source. This is Ureidoglycolate lyase from Salmonella typhimurium (strain LT2 / SGSC1412 / ATCC 700720).